The primary structure comprises 217 residues: Spore coat protein F-like protein YhcQ (217 aa).

Positions 1–11 are enriched in low complexity; sequence MDQFNQQQQSQ. The tract at residues 1–28 is disordered; that stretch reads MDQFNQQQQSQMNKGIPGKPHKNHGGHE.

This sequence belongs to the CotF family.

The protein resides in the spore coat. The protein is Spore coat protein F-like protein YhcQ (yhcQ) of Bacillus subtilis (strain 168).